Here is a 558-residue protein sequence, read N- to C-terminus: Potassium-transporting ATPase potassium-binding subunit (558 aa).

12 helical membrane passes run 1–21 (MSIV…SRYL), 60–80 (IKHF…LLLI), 129–149 (VITF…IAML), 169–189 (FIVR…ISQG), 246–266 (WSNY…VFLF), 281–301 (IMIF…CLYF), 326–346 (FGIG…TGTV), 353–373 (LTPL…VFGG), 376–396 (VGLM…SLMI), 415–435 (IALS…LAFI), 485–505 (IVML…VSSL), and 523–543 (LFFS…TFLP).

This sequence belongs to the KdpA family. The system is composed of three essential subunits: KdpA, KdpB and KdpC.

Its subcellular location is the cell membrane. In terms of biological role, part of the high-affinity ATP-driven potassium transport (or Kdp) system, which catalyzes the hydrolysis of ATP coupled with the electrogenic transport of potassium into the cytoplasm. This subunit binds the extracellular potassium ions and delivers the ions to the membrane domain of KdpB through an intramembrane tunnel. The chain is Potassium-transporting ATPase potassium-binding subunit from Staphylococcus haemolyticus (strain JCSC1435).